The following is a 124-amino-acid chain: MPTIQQLIRSERYNTKKKTKSPALKSCPQRRGVCTRVYTTTPKKPNSALRKVARVRLTSGFEVTAYIPGIGHNLQEHSVVMIRGGRVKDLPGVRYHIIRGTLDTAGVKDRRQGRSKYGAKRPKD.

Aspartate 89 bears the 3-methylthioaspartic acid mark. Residues aspartate 103 to aspartate 124 are disordered. Over residues glycine 113–aspartate 124 the composition is skewed to basic residues.

Belongs to the universal ribosomal protein uS12 family. As to quaternary structure, part of the 30S ribosomal subunit. Contacts proteins S8 and S17. May interact with IF1 in the 30S initiation complex.

Functionally, with S4 and S5 plays an important role in translational accuracy. In terms of biological role, interacts with and stabilizes bases of the 16S rRNA that are involved in tRNA selection in the A site and with the mRNA backbone. Located at the interface of the 30S and 50S subunits, it traverses the body of the 30S subunit contacting proteins on the other side and probably holding the rRNA structure together. The combined cluster of proteins S8, S12 and S17 appears to hold together the shoulder and platform of the 30S subunit. This chain is Small ribosomal subunit protein uS12, found in Acaryochloris marina (strain MBIC 11017).